The following is a 415-amino-acid chain: Serine hydroxymethyltransferase (415 aa).

(6S)-5,6,7,8-tetrahydrofolate is bound by residues Leu-122 and 126–128; that span reads GHL. Lys-230 is modified (N6-(pyridoxal phosphate)lysine).

It belongs to the SHMT family. In terms of assembly, homodimer. Requires pyridoxal 5'-phosphate as cofactor.

The protein localises to the cytoplasm. It carries out the reaction (6R)-5,10-methylene-5,6,7,8-tetrahydrofolate + glycine + H2O = (6S)-5,6,7,8-tetrahydrofolate + L-serine. It participates in one-carbon metabolism; tetrahydrofolate interconversion. It functions in the pathway amino-acid biosynthesis; glycine biosynthesis; glycine from L-serine: step 1/1. Its function is as follows. Catalyzes the reversible interconversion of serine and glycine with tetrahydrofolate (THF) serving as the one-carbon carrier. This reaction serves as the major source of one-carbon groups required for the biosynthesis of purines, thymidylate, methionine, and other important biomolecules. Also exhibits THF-independent aldolase activity toward beta-hydroxyamino acids, producing glycine and aldehydes, via a retro-aldol mechanism. The chain is Serine hydroxymethyltransferase from Leptothrix cholodnii (strain ATCC 51168 / LMG 8142 / SP-6) (Leptothrix discophora (strain SP-6)).